A 179-amino-acid polypeptide reads, in one-letter code: Probable splicing factor, arginine/serine-rich 6 (179 aa).

The 74-residue stretch at Ala3–Gly76 folds into the RRM domain. Residues Thr75–His179 form a disordered region. The segment covering Arg78–Gly93 has biased composition (gly residues). The span at Gly94–His160 shows a compositional bias: basic and acidic residues. Residues Ser161–Ser173 are compositionally biased toward basic residues.

It belongs to the splicing factor SR family. In terms of processing, extensively phosphorylated on serine residues in the RS domain.

It is found in the nucleus. Functionally, plays a functionally redundant role in shifting germ cell sexual differentiation in hermaprodites. Required for the development of somatic gonad structures and for progression from larval stage to adulthood. In Caenorhabditis elegans, this protein is Probable splicing factor, arginine/serine-rich 6 (rsp-6).